The sequence spans 551 residues: Putative transport protein HI_0035 (551 aa).

Helical transmembrane passes span 4 to 24 (IAIT…IGHW), 28 to 48 (GVGL…HFTN), 65 to 85 (FGLI…FFSS), 95 to 115 (AFAI…HKIA), and 157 to 177 (VSYA…MWLI). 2 consecutive RCK C-terminal domains span residues 191 to 275 (RFNA…IIGH) and 277 to 360 (VDAP…VIGN). 6 helical membrane passes run 370–390 (MLPV…PFYI), 402–424 (AGGP…LYWF), 438–458 (IVLF…DTLV), 463–483 (LEWM…VGTI), 492–512 (YLTI…LAFA), and 529–549 (VYPL…VLLW).

Belongs to the AAE transporter (TC 2.A.81) family. YidE subfamily.

The protein localises to the cell membrane. The sequence is that of Putative transport protein HI_0035 from Haemophilus influenzae (strain ATCC 51907 / DSM 11121 / KW20 / Rd).